Consider the following 448-residue polypeptide: Integrator complex subunit 15 (448 aa).

This sequence belongs to the Integrator subunit 15 family. As to quaternary structure, component of the Integrator complex, composed of core subunits INTS1, INTS2, INTS3, INTS4, INTS5, INTS6, INTS7, INTS8, INTS9/RC74, INTS10, INTS11/CPSF3L, INTS12, INTS13, INTS14 and INTS15. The core complex associates with protein phosphatase 2A subunits PPP2CA and PPP2R1A, to form the Integrator-PP2A (INTAC) complex. INTS15 is part of the tail subcomplex, composed of INTS10, INTS13, INTS14 and INTS15.

It localises to the nucleus. The protein localises to the chromosome. Its function is as follows. Component of the integrator complex, a multiprotein complex that terminates RNA polymerase II (Pol II) transcription in the promoter-proximal region of genes. The integrator complex provides a quality checkpoint during transcription elongation by driving premature transcription termination of transcripts that are unfavorably configured for transcriptional elongation: the complex terminates transcription by (1) catalyzing dephosphorylation of the C-terminal domain (CTD) of Pol II subunit POLR2A/RPB1 and SUPT5H/SPT5, (2) degrading the exiting nascent RNA transcript via endonuclease activity and (3) promoting the release of Pol II from bound DNA. The integrator complex is also involved in terminating the synthesis of non-coding Pol II transcripts, such as enhancer RNAs (eRNAs), small nuclear RNAs (snRNAs), telomerase RNAs and long non-coding RNAs (lncRNAs). INTS15 is part of the integrator tail module that acts as a platform for the recruitment of transcription factors at promoters. Within the integrator complex, INTS15 is required to bridge different integrator modules. The protein is Integrator complex subunit 15 of Mus musculus (Mouse).